The primary structure comprises 1229 residues: ABC transporter B family member 3 (1229 aa).

Residues 22–42 traverse the membrane as a helical segment; that stretch reads VLLMIVGSIGAIGNGVGFPLM. Residues 25–313 enclose the ABC transmembrane type-1 1 domain; it reads MIVGSIGAIG…TTPCLTAFAA (289 aa). Asparagine 56 carries N-linked (GlcNAc...) asparagine glycosylation. 5 helical membrane passes run 73 to 93, 149 to 169, 172 to 192, 252 to 272, and 281 to 301; these read FVYL…CWMI, FIQL…KGWL, LVML…PIIV, GLGL…AIWF, and GYTG…SMSL. Positions 348-584 constitute an ABC transporter 1 domain; that stretch reads IELRDVCFSY…HEGAYAQLIR (237 aa). 383–390 provides a ligand contact to ATP; it reads GESGSGKS. Asparagine 450 carries an N-linked (GlcNAc...) asparagine glycan. Positions 594–606 are enriched in basic and acidic residues; the sequence is RLESSNELRDRSI. The tract at residues 594–614 is disordered; the sequence is RLESSNELRDRSINRGSSRNI. Residue asparagine 645 is glycosylated (N-linked (GlcNAc...) asparagine). The next 2 membrane-spanning stretches (helical) occupy residues 661–681 and 706–726; these read ILIL…IFGI and MIFV…TYLF. In terms of domain architecture, ABC transmembrane type-1 2 spans 662 to 949; it reads LILGTLLGAV…ASSFAPDSSK (288 aa). The N-linked (GlcNAc...) asparagine glycan is linked to asparagine 758. Helical transmembrane passes span 797-817, 888-908, and 923-943; these read IIAF…IPLI, GVGF…CFYV, and VFQV…ASSF. In terms of domain architecture, ABC transporter 2 spans 984 to 1222; that stretch reads IELCHISFTY…EGGVYASLVQ (239 aa). 1019 to 1026 contributes to the ATP binding site; the sequence is GESGSGKS. 2 N-linked (GlcNAc...) asparagine glycosylation sites follow: asparagine 1073 and asparagine 1173.

It belongs to the ABC transporter superfamily. ABCB family. Multidrug resistance exporter (TC 3.A.1.201) subfamily.

The protein resides in the membrane. The chain is ABC transporter B family member 3 (ABCB3) from Arabidopsis thaliana (Mouse-ear cress).